Consider the following 839-residue polypeptide: Oxidation resistance protein 1 (839 aa).

The tract at residues 38-91 (DYLREPAPGDPGCGPGELRPPSPTSPEGPDTGQKKTLDKKDGRRMSFQKPKGTI) is disordered. Residues 69–81 (GQKKTLDKKDGRR) show a composition bias toward basic and acidic residues. Phosphoserine is present on S83. The LysM domain occupies 91–134 (IEYTVESRDSLNSIALKFDTTPNELVQLNKLFSRAVVTGQVLYV). T111 bears the Phosphothreonine mark. Over residues 140-161 (VSSVESSPSLSPVSPLSPTSSE) the composition is skewed to low complexity. A disordered region spans residues 140-195 (VSSVESSPSLSPVSPLSPTSSEAEFDKTTTPDVVHPKEAPPSSTESSIRPARVVSS). Positions 163-177 (EFDKTTTPDVVHPKE) are enriched in basic and acidic residues. A phosphoserine mark is found at S194, S195, and S197. In terms of domain architecture, GRAM spans 206 to 261 (KFLKINCKYITNGKGTVSGVLLVTPNNIMFDPHKTDPLVQENGCEEYGIMCPMEEV). Phosphoserine occurs at positions 287, 327, and 329. 2 disordered regions span residues 292 to 401 (CHSK…VGAL) and 415 to 540 (KEGD…SLLK). At T334 the chain carries Phosphothreonine. S339 is subject to Phosphoserine. The segment covering 340–356 (PIREELPSSELRQEKSS) has biased composition (basic and acidic residues). Composition is skewed to polar residues over residues 357–378 (DASS…TAAS) and 387–397 (TNANSGRSSSE). Composition is skewed to basic and acidic residues over residues 433 to 450 (QSTD…HHEN) and 469 to 497 (LTEK…ELRK). S488 bears the Phosphoserine mark. Residues 502-519 (HSMQQAKQQRDTIQQVAQ) are compositionally biased toward polar residues. The mediates oxidative antimutator activity stretch occupies residues 543-570 (RRHRLHKFLCLRVGKPMRKTFVSQASAT). The disordered stretch occupies residues 648 to 677 (TREDINSKQAAPAKADLEPESFRPNLSDPS). Residues 678–839 (ELLLPDQIEK…IQDIEIWAFE (162 aa)) form the TLDc domain.

It belongs to the OXR1 family.

It localises to the mitochondrion. Its function is as follows. May be involved in protection from oxidative damage. The polypeptide is Oxidation resistance protein 1 (Oxr1) (Rattus norvegicus (Rat)).